Consider the following 184-residue polypeptide: Peptidoglycan-recognition protein SC2 (184 aa).

The signal sequence occupies residues 1 to 20 (MANKALILLAVLFCAQAVLG). One can recognise an N-acetylmuramoyl-L-alanine amidase domain in the interval 45 to 169 (SYAVIHHTAG…RQVGSTECPG (125 aa)). His-50 is a Zn(2+) binding site. Cys-57 and Cys-63 form a disulfide bridge. Residues His-159 and Cys-167 each contribute to the Zn(2+) site.

The protein belongs to the N-acetylmuramoyl-L-alanine amidase 2 family. Zn(2+) serves as cofactor.

Its subcellular location is the secreted. It carries out the reaction Hydrolyzes the link between N-acetylmuramoyl residues and L-amino acid residues in certain cell-wall glycopeptides.. In terms of biological role, N-acetylmuramyl-L-alanine amidase involved in innate immunity by degrading bacterial peptidoglycans (PGN). Probably plays a scavenger role by digesting biologically active PGN into biologically inactive fragments. Has no direct bacteriolytic activity. The sequence is that of Peptidoglycan-recognition protein SC2 (PGRP-SC2) from Drosophila simulans (Fruit fly).